Reading from the N-terminus, the 698-residue chain is Polyphosphate kinase (698 aa).

Asn63 contacts ATP. Arg390 and Arg420 together coordinate Mg(2+). The Phosphohistidine intermediate role is filled by His450. The ATP site is built by Tyr483, Arg579, and His607.

It belongs to the polyphosphate kinase 1 (PPK1) family. Requires Mg(2+) as cofactor. An intermediate of this reaction is the autophosphorylated ppk in which a phosphate is covalently linked to a histidine residue through a N-P bond.

The enzyme catalyses [phosphate](n) + ATP = [phosphate](n+1) + ADP. Its function is as follows. Catalyzes the reversible transfer of the terminal phosphate of ATP to form a long-chain polyphosphate (polyP). In Xylella fastidiosa (strain 9a5c), this protein is Polyphosphate kinase.